The chain runs to 343 residues: UPF0284 protein Msed_0735 (343 aa).

This sequence belongs to the UPF0284 family.

The chain is UPF0284 protein Msed_0735 from Metallosphaera sedula (strain ATCC 51363 / DSM 5348 / JCM 9185 / NBRC 15509 / TH2).